Here is a 1512-residue protein sequence, read N- to C-terminus: Lysophospholipase NTE1 (1512 aa).

Residues 1–48 (MAAPDAMTSLVKSSVALLSSAHESLPTSLAAMKTAETAPSSTFGILGR) are Cytoplasmic-facing. A helical membrane pass occupies residues 49–69 (VILSILSVLPTLLFWVSYTLP). Topologically, residues 70–83 (TWLFTLFSMSLTFT) are lumenal. Residues 84–104 (MNFTTLMLVLVFVVSTISYFV) traverse the membrane as a helical segment. Topologically, residues 105 to 1512 (RYRYLTMYAR…RTMAPRRASI (1408 aa)) are cytoplasmic. Disordered stretches follow at residues 204–230 (NREE…QAHR), 262–362 (RHDE…AHPD), 534–556 (TQMS…QHDV), and 740–770 (TEDD…KRSR). Residues 208–217 (SDSDEDDGEL) show a composition bias toward acidic residues. Residues 268–291 (GPSSSTPMSPQHRPSMTRNSSFNM) are compositionally biased toward polar residues. Basic residues predominate over residues 343-358 (HSKQRRSPSRSTKPKS). Over residues 537–549 (SRGTGRSGRSSFS) the composition is skewed to low complexity. A nucleoside 3',5'-cyclic phosphate-binding positions include 669–793 (LSAS…SNRS) and 830–950 (RLTT…IASR). Over residues 751 to 761 (PTATNTSLRNG) the composition is skewed to polar residues. The region spanning 1209–1373 (LVLGGGGARG…IDNLTVAHMK (165 aa)) is the PNPLA domain. The GXGXXG motif lies at 1213 to 1218 (GGGARG). The GXSXG motif lies at 1240–1244 (GTSIG). Ser1242 functions as the Nucleophile in the catalytic mechanism. Residue Asp1360 is the Proton acceptor of the active site. The DGA/G motif lies at 1360 to 1362 (DGG).

The protein belongs to the NTE family.

It localises to the endoplasmic reticulum membrane. The catalysed reaction is a 1-acyl-sn-glycero-3-phosphocholine + H2O = sn-glycerol 3-phosphocholine + a fatty acid + H(+). With respect to regulation, inhibited by organophosphorus esters. Functionally, intracellular phospholipase B that catalyzes the double deacylation of phosphatidylcholine (PC) to glycerophosphocholine (GroPCho). Plays an important role in membrane lipid homeostasis. Responsible for the rapid PC turnover in response to inositol, elevated temperatures, or when choline is present in the growth medium. In Phaeosphaeria nodorum (strain SN15 / ATCC MYA-4574 / FGSC 10173) (Glume blotch fungus), this protein is Lysophospholipase NTE1 (NTE1).